The following is a 128-amino-acid chain: Fluoride-specific ion channel FluC (128 aa).

4 helical membrane-spanning segments follow: residues 10–30, 40–60, 71–91, and 102–122; these read FLAVAIGAALGACARWLAGLW, TLLVNLAGGYLIGLALAVLLA, AAVTGFLGGLTTFSTFSAETV, and ALGYAALSLVGSLALTALGLA. Residues Gly-78 and Thr-81 each contribute to the Na(+) site.

It belongs to the fluoride channel Fluc/FEX (TC 1.A.43) family.

It localises to the cell inner membrane. The enzyme catalyses fluoride(in) = fluoride(out). Its activity is regulated as follows. Na(+) is not transported, but it plays an essential structural role and its presence is essential for fluoride channel function. Functionally, fluoride-specific ion channel. Important for reducing fluoride concentration in the cell, thus reducing its toxicity. This chain is Fluoride-specific ion channel FluC, found in Bordetella petrii (strain ATCC BAA-461 / DSM 12804 / CCUG 43448).